The chain runs to 470 residues: Glucose-1-phosphate adenylyltransferase (470 aa).

Alpha-D-glucose 1-phosphate-binding positions include G164, 181 to 182, and S199; that span reads EK.

The protein belongs to the bacterial/plant glucose-1-phosphate adenylyltransferase family. As to quaternary structure, homotetramer.

It carries out the reaction alpha-D-glucose 1-phosphate + ATP + H(+) = ADP-alpha-D-glucose + diphosphate. It functions in the pathway glycan biosynthesis; glycogen biosynthesis. Its function is as follows. Involved in the biosynthesis of ADP-glucose, a building block required for the elongation reactions to produce glycogen. Catalyzes the reaction between ATP and alpha-D-glucose 1-phosphate (G1P) to produce pyrophosphate and ADP-Glc. This Pseudarthrobacter chlorophenolicus (strain ATCC 700700 / DSM 12829 / CIP 107037 / JCM 12360 / KCTC 9906 / NCIMB 13794 / A6) (Arthrobacter chlorophenolicus) protein is Glucose-1-phosphate adenylyltransferase.